A 125-amino-acid polypeptide reads, in one-letter code: Putative RNA polymerase sigma-G factor (125 aa).

The protein belongs to the sigma-70 factor family.

Sigma factors are initiation factors that promote the attachment of RNA polymerase to specific initiation sites and are then released. The polypeptide is Putative RNA polymerase sigma-G factor (Bacillus thuringiensis subsp. kurstaki).